Reading from the N-terminus, the 311-residue chain is Probable acetylxylan esterase A (311 aa).

Residues 1–19 (MAPFSFILTVLLYALTCSA) form the signal peptide. The active-site Charge relay system is the Ser153. Asn197 and Asn224 each carry an N-linked (GlcNAc...) asparagine glycan.

Belongs to the carbohydrate esterase 1 (CE1) family. AxeA subfamily. Monomer.

The protein localises to the secreted. The enzyme catalyses Deacetylation of xylans and xylo-oligosaccharides.. The protein operates within glycan degradation; xylan degradation. Functionally, acetylxylan esterase involved in the hydrolysis of xylan, a major structural heterogeneous polysaccharide found in plant biomass representing the second most abundant polysaccharide in the biosphere, after cellulose. Degrades acetylated xylans by cleaving acetyl side groups from the hetero-xylan backbone. In Aspergillus terreus (strain NIH 2624 / FGSC A1156), this protein is Probable acetylxylan esterase A (axeA).